Consider the following 412-residue polypeptide: Histone-lysine N-methyltransferase SUV39H1 (412 aa).

The segment at 1–89 is interaction with SIRT1; it reads MAENLKGCSV…LKCIRVLKQF (89 aa). The 59-residue stretch at 43-101 folds into the Chromo domain; it reads FEVEYLCDYKKIREQEYYLVKWRGYPDSENTWEPRQNLKCIRVLKQFHKDLERELVRRH. Positions 179–240 constitute a Pre-SET domain; sequence VGCECQDCLL…DCPNRVVQKG (62 aa). Zn(2+)-binding residues include Cys-181, Cys-183, Cys-186, Cys-194, Cys-195, Cys-222, Cys-226, Cys-228, and Cys-232. Residues 243-366 enclose the SET domain; sequence YDLCIFRTND…AGEELTFDYN (124 aa). 254–256 lines the S-adenosyl-L-methionine pocket; sequence RGW. A mediates interaction with MECOM region spans residues 255–377; that stretch reads GWGVRTLEKI…QVDPVDMEST (123 aa). Lys-266 is subject to N6-acetyllysine. Residues Tyr-297 and 323–324 each bind S-adenosyl-L-methionine; that span reads NH. Cys-326 serves as a coordination point for Zn(2+). A Phosphoserine modification is found at Ser-391. One can recognise a Post-SET domain in the interval 396-412; sequence VRIECKCGTTACRKYLF. Cys-400, Cys-402, and Cys-407 together coordinate Zn(2+).

The protein belongs to the class V-like SAM-binding methyltransferase superfamily. Histone-lysine methyltransferase family. Suvar3-9 subfamily. In terms of assembly, interacts with CCAR2 and GFI1B. Component of the eNoSC complex, composed of SIRT1, SUV39H1 and RRP8. Interacts with H3 and H4 histones. Interacts with DNMT3B, CBX1, CBX4, MBD1, RUNX1, RUNX3, MYOD1, SMAD5 and RB1. Interacts with SBF1 through the SET domain. Interacts with HDAC1 and HDAC2 through the N-terminus and associates with the core histone deacetylase complex composed of HDAC1, HDAC2, RBBP4 and RBBP7. Interacts (via SET domain) with MECOM; enhances MECOM transcriptional repression activity. Interacts with LMNA; the interaction increases stability of SUV39H1. The large PER complex involved in the histone methylation is composed of at least PER2, CBX3, TRIM28, SUV39H1 and/or SUV39H2; CBX3 mediates the formation of the complex. In terms of processing, phosphorylated on serine residues, and to a lesser degree, on threonine residues. Acetylated at Lys-266, leading to inhibition of enzyme activity. SIRT1-mediated deacetylation relieves this inhibition. Post-translationally, ubiquitinated by the DCX(DCAF13) E3 ubiquitin ligase complex, leading to its degradation. Widely expressed.

Its subcellular location is the nucleus. It localises to the nucleus lamina. The protein resides in the nucleoplasm. The protein localises to the chromosome. It is found in the centromere. The enzyme catalyses L-lysyl(9)-[histone H3] + 3 S-adenosyl-L-methionine = N(6),N(6),N(6)-trimethyl-L-lysyl(9)-[histone H3] + 3 S-adenosyl-L-homocysteine + 3 H(+). Its activity is regulated as follows. Negatively regulated by CCAR2. Functionally, histone methyltransferase that specifically trimethylates 'Lys-9' of histone H3 using monomethylated H3 'Lys-9' as substrate. H3 'Lys-9' trimethylation represents a specific tag for epigenetic transcriptional repression by recruiting HP1 (CBX1, CBX3 and/or CBX5) proteins to methylated histones. Mainly functions in heterochromatin regions, thereby playing a central role in the establishment of constitutive heterochromatin at pericentric and telomere regions. H3 'Lys-9' trimethylation is also required to direct DNA methylation at pericentric repeats. SUV39H1 is targeted to histone H3 via its interaction with RB1 and is involved in many processes, such as repression of MYOD1-stimulated differentiation, regulation of the control switch for exiting the cell cycle and entering differentiation, repression by the PML-RARA fusion protein, BMP-induced repression, repression of switch recombination to IgA and regulation of telomere length. Component of the eNoSC (energy-dependent nucleolar silencing) complex, a complex that mediates silencing of rDNA in response to intracellular energy status and acts by recruiting histone-modifying enzymes. The eNoSC complex is able to sense the energy status of cell: upon glucose starvation, elevation of NAD(+)/NADP(+) ratio activates SIRT1, leading to histone H3 deacetylation followed by dimethylation of H3 at 'Lys-9' (H3K9me2) by SUV39H1 and the formation of silent chromatin in the rDNA locus. Recruited by the PER complex to the E-box elements of the circadian target genes such as PER2 itself or PER1, contributes to the conversion of local chromatin to a heterochromatin-like repressive state through H3 'Lys-9' trimethylation. The chain is Histone-lysine N-methyltransferase SUV39H1 (Suv39h1) from Mus musculus (Mouse).